Consider the following 745-residue polypeptide: Inhibitor of nuclear factor kappa-B kinase subunit alpha (745 aa).

The region spanning 15–300 (WEMRERLGTG…IDLTLKQPRC (286 aa)) is the Protein kinase domain. Residues 21-29 (LGTGGFGNV) and Lys44 contribute to the ATP site. Phosphothreonine; by PKB/AKT1 and SGK1 is present on Thr23. The active-site Proton acceptor is Asp144. Ser176 bears the Phosphoserine; by MAP3K14 mark. Ser180 carries the phosphoserine; by SGK1 modification. The tract at residues 455 to 476 (LLRYNANLTKMKNTLISASQQL) is leucine-zipper. Residues 738–743 (LDWSWL) form an NEMO-binding region.

This sequence belongs to the protein kinase superfamily. Ser/Thr protein kinase family. I-kappa-B kinase subfamily. In terms of assembly, component of the I-kappa-B-kinase (IKK) core complex consisting of CHUK, IKBKB and IKBKG; probably four alpha/CHUK-beta/IKBKB dimers are associated with four gamma/IKBKG subunits. The IKK core complex seems to associate with regulatory or adapter proteins to form a IKK-signalosome holo-complex. The IKK complex associates with TERF2IP/RAP1, leading to promote IKK-mediated phosphorylation of RELA/p65. Part of a complex composed of NCOA2, NCOA3, CHUK/IKKA, IKBKB, IKBKG and CREBBP. Part of a 70-90 kDa complex at least consisting of CHUK/IKKA, IKBKB, NFKBIA, RELA, ELP1 and MAP3K14. Directly interacts with TRPC4AP. May interact with TRAF2. Interacts with NALP2. May interact with MAVS/IPS1. Interacts with ARRB1 and ARRB2. Interacts with NLRC5; prevents CHUK phosphorylation and kinase activity. Interacts with PIAS1; this interaction induces PIAS1 phosphorylation. Interacts with ZNF268 isoform 2; the interaction is further increased in a TNF-alpha-dependent manner. Interacts with LRRC14. Interacts with SASH1. Directly interacts with DDX3X after the physiological activation of the TLR7 and TLR8 pathways; this interaction enhances CHUK autophosphorylation. In terms of processing, ubiquitinated by TRIM56 via 'Lys-63'-linked ubiquitination, promoting activation of CHUK/IKKA. Post-translationally, phosphorylated by MAP3K14/NIK, AKT and to a lesser extent by MEKK1, and dephosphorylated by PP2A. Autophosphorylated. Ubiquitous only for isoform 1, isoforms 2 and 3 are expressed predominantly in brain and T-lymphocytes.

It is found in the cytoplasm. The protein resides in the nucleus. The catalysed reaction is L-seryl-[I-kappa-B protein] + ATP = O-phospho-L-seryl-[I-kappa-B protein] + ADP + H(+). Activated when phosphorylated and inactivated when dephosphorylated. Functionally, serine kinase that plays an essential role in the NF-kappa-B signaling pathway which is activated by multiple stimuli such as inflammatory cytokines, bacterial or viral products, DNA damages or other cellular stresses. Acts as a part of the canonical IKK complex in the conventional pathway of NF-kappa-B activation and phosphorylates inhibitors of NF-kappa-B on serine residues. These modifications allow polyubiquitination of the inhibitors and subsequent degradation by the proteasome. In turn, free NF-kappa-B is translocated into the nucleus and activates the transcription of hundreds of genes involved in immune response, growth control, or protection against apoptosis. Negatively regulates the pathway by phosphorylating the scaffold protein TAXBP1 and thus promoting the assembly of the A20/TNFAIP3 ubiquitin-editing complex (composed of A20/TNFAIP3, TAX1BP1, and the E3 ligases ITCH and RNF11). Therefore, CHUK plays a key role in the negative feedback of NF-kappa-B canonical signaling to limit inflammatory gene activation. As part of the non-canonical pathway of NF-kappa-B activation, the MAP3K14-activated CHUK/IKKA homodimer phosphorylates NFKB2/p100 associated with RelB, inducing its proteolytic processing to NFKB2/p52 and the formation of NF-kappa-B RelB-p52 complexes. In turn, these complexes regulate genes encoding molecules involved in B-cell survival and lymphoid organogenesis. Also participates in the negative feedback of the non-canonical NF-kappa-B signaling pathway by phosphorylating and destabilizing MAP3K14/NIK. Within the nucleus, phosphorylates CREBBP and consequently increases both its transcriptional and histone acetyltransferase activities. Modulates chromatin accessibility at NF-kappa-B-responsive promoters by phosphorylating histones H3 at 'Ser-10' that are subsequently acetylated at 'Lys-14' by CREBBP. Additionally, phosphorylates the CREBBP-interacting protein NCOA3. Also phosphorylates FOXO3 and may regulate this pro-apoptotic transcription factor. Phosphorylates RIPK1 at 'Ser-25' which represses its kinase activity and consequently prevents TNF-mediated RIPK1-dependent cell death. Phosphorylates AMBRA1 following mitophagy induction, promoting AMBRA1 interaction with ATG8 family proteins and its mitophagic activity. In Mus musculus (Mouse), this protein is Inhibitor of nuclear factor kappa-B kinase subunit alpha (Chuk).